We begin with the raw amino-acid sequence, 48 residues long: SPbeta prophage-derived uncharacterized protein YotE (48 aa).

This Bacillus subtilis (strain 168) protein is SPbeta prophage-derived uncharacterized protein YotE (yotE).